The sequence spans 307 residues: MSITAAQVKELRELSGAGMMDCKAALMETNGDIETAVDWLRKKGMAKADKKAGRTAAEGLIGIASKGLSAVVVEVNSETDFVARNDAFQTIVRNVATAALDTEGSVESVSASIYPGSEKTVEEAIKDAIGTIGENMAFRRSAKLSVQNGAVATYIHNSVADGLGKLGVLVGIETTGDKEVAVDFARKVAMHIAATNPLALTVADVDASIVEREKAIFSDQARQSGKPENIIEKMVEGRIRKFYEEVVLLSQAFVMNPDVTVEASLKDAEKMIGAPAKITGFVRFALGEGVEKEEVDFAAEVAAAAKG.

An involved in Mg(2+) ion dislocation from EF-Tu region spans residues 79-82; that stretch reads TDFV.

It belongs to the EF-Ts family.

The protein resides in the cytoplasm. In terms of biological role, associates with the EF-Tu.GDP complex and induces the exchange of GDP to GTP. It remains bound to the aminoacyl-tRNA.EF-Tu.GTP complex up to the GTP hydrolysis stage on the ribosome. The chain is Elongation factor Ts from Bartonella bacilliformis (strain ATCC 35685 / KC583 / Herrer 020/F12,63).